Reading from the N-terminus, the 949-residue chain is Collagen alpha-2(I) chain (949 aa).

Positions 1-949 are disordered; the sequence is SGGFDFSFLP…FGYEGDFYRA (949 aa). 4-hydroxyproline occurs at positions 10, 13, 34, and 40. A compositionally biased stretch (low complexity) spans 27–66; sequence LMGPRGPPGASGAPGPQGFQGPAGEPGEPGQTGPAGARGP. Lys95 carries the 5-hydroxylysine; alternate modification. Lys95 carries an O-linked (Gal...) hydroxylysine; alternate glycan. Composition is skewed to low complexity over residues 147 to 162 and 208 to 229; these read SVGP…SAGP and PGAN…AGAP. The span at 263-272 shows a compositional bias: gly residues; that stretch reads GESGGKGEPG. The segment covering 273 to 283 has biased composition (low complexity); sequence SAGPQGPPGSS. The span at 292-313 shows a compositional bias: gly residues; it reads NGEGSTGPTGPPGLRGGPGSRG. Residues Pro348 and Pro351 each carry the 4-hydroxyproline modification. Positions 377–396 are enriched in low complexity; it reads LPGIDGRPGPIGPAGARGEA. Over residues 435–444 the composition is skewed to gly residues; the sequence is GVQGGKGEQG. Composition is skewed to low complexity over residues 490-507 and 519-529; these read PGES…SRGP and EPGVVGAPGTA. A compositionally biased stretch (gly residues) spans 530–539; sequence GPAGSGGLPG. 2 stretches are compositionally biased toward low complexity: residues 562 to 606 and 613 to 633; these read VGTT…PRGS and VGPA…QPGA. A compositionally biased stretch (basic and acidic residues) spans 634-643; it reads KGERGTKGPK. Residues 651–661 show a composition bias toward low complexity; sequence PTGPVGSAGPA. A compositionally biased stretch (gly residues) spans 671-680; the sequence is GSRGDGGPPG. Low complexity predominate over residues 682 to 691; sequence TGFPGAAGRT. Over residues 722–736 the composition is skewed to gly residues; that stretch reads GPVGRGETGAGGPPG. Low complexity-rich tracts occupy residues 737-771, 779-792, and 810-825; these read FTGE…LGLP, LPGV…PGPL, and EPGP…ALGP. A compositionally biased stretch (basic and acidic residues) spans 835-846; that stretch reads RGDKGEPGEKGP. The segment covering 921–931 has biased composition (pro residues); that stretch reads PAGPPGPPGPP.

This sequence belongs to the fibrillar collagen family. In terms of assembly, trimers of one alpha 2(I) and two alpha 1(I) chains. Interacts (via C-terminus) with TMEM131 (via PapD-L domain); the interaction is direct and is involved in assembly and TRAPPIII ER-to-Golgi transport complex-dependent secretion of collagen. In terms of processing, prolines at the third position of the tripeptide repeating unit (G-X-Y) are hydroxylated in some or all of the chains. In terms of tissue distribution, expressed in bones.

Its subcellular location is the secreted. The protein resides in the extracellular space. The protein localises to the extracellular matrix. Its function is as follows. Type I collagen is a member of group I collagen (fibrillar forming collagen). This Acratocnus ye (Hispaniolan ground sloth) protein is Collagen alpha-2(I) chain.